The primary structure comprises 155 residues: Small ribosomal subunit protein uS7c (155 aa).

The protein belongs to the universal ribosomal protein uS7 family. As to quaternary structure, part of the 30S ribosomal subunit.

The protein resides in the plastid. The protein localises to the chloroplast. Its function is as follows. One of the primary rRNA binding proteins, it binds directly to 16S rRNA where it nucleates assembly of the head domain of the 30S subunit. The chain is Small ribosomal subunit protein uS7c (rps7) from Ananas comosus (Pineapple).